A 741-amino-acid chain; its full sequence is ABC transporter D family member 2 (741 aa).

3 helical membrane passes run 39 to 59 (GSLG…FSLV), 119 to 139 (FLSL…SVSI), and 260 to 280 (VVVM…VSGF). In terms of domain architecture, ABC transmembrane type-1 spans 131–409 (ARTMLSVSIA…LMVALSQAIG (279 aa)). One can recognise an ABC transporter domain in the interval 518–740 (IKFENVSIVS…DDDHLKKPLS (223 aa)). Residue 551–558 (GPNGSGKS) participates in ATP binding.

This sequence belongs to the ABC transporter superfamily. ABCD family. Peroxisomal fatty acyl CoA transporter (TC 3.A.1.203) subfamily.

The protein localises to the membrane. This Dictyostelium discoideum (Social amoeba) protein is ABC transporter D family member 2 (abcD2).